A 309-amino-acid polypeptide reads, in one-letter code: Protein FdhE (309 aa).

The protein belongs to the FdhE family.

The protein resides in the cytoplasm. Necessary for formate dehydrogenase activity. This is Protein FdhE from Escherichia coli (strain SMS-3-5 / SECEC).